A 671-amino-acid polypeptide reads, in one-letter code: MAIVHTLPVPLEPARETATAPKTPAMGSVSSLISGRPCPGGPAPQRHHGVPGPTFFRQQDGLLPGGYEAQEPLCPAVPPRKAVPGNSFTYVNEDFRTESPPSPSSDVEDPREHQAHNAHLRGPPPKLIPVSGKLEKNMEKILIRPTAFKPVLPKPRGAPSLPGFLGPRAAGLSGSQGSLTQLFGGPASSSSSSSSSSAADKPLALSGWASGCPSGTLSDSGRNSLSSLPTYSTGGAEPTTNSPGGHLPSHGPGRGALPGPARGVPTGPSHSDSGRSSSSKSTGSLGGRVAGGLLGSGARASPGSSSGGDRSPPPPPPPPPSDEALLHCVLEGKLRDREAELQQLRDSMDESEATVCQAFGARQRRWPRERGEDCAAQAQQATQRVQRAQQLLQLQVFQLQQEKRQLQDDFAQLLQEREQLERRCATFEREQRELGPRLEETKWEVCQKSGEISLLKQQLKESQAELVQKGSELVALRVALREARATLRVSEGRARGLQEAARAREQELEACSQELQRYRQEAERLREKAGHLDAEASGLRDPPVPPATTDPFLLAESDEAKVQRAAAGAGGSLRAQVERLRQELQREQRRGDEQRDSFEGERLAWQAEKEQVIRYQKQLQHNYIQMYRRNRQLEQELQQLSLELEARELADLGLAESAPCICLEEITATEI.

Disordered regions lie at residues 1–131 (MAIV…IPVS) and 149–324 (KPVL…SDEA). The segment at 1–333 (MAIVHTLPVP…ALLHCVLEGK (333 aa)) is required for centrosomal localization. Low complexity predominate over residues 187-199 (ASSSSSSSSSSAA). Residues 213–241 (PSGTLSDSGRNSLSSLPTYSTGGAEPTTN) show a composition bias toward polar residues. Over residues 242-283 (SPGGHLPSHGPGRGALPGPARGVPTGPSHSDSGRSSSSKSTG) the composition is skewed to low complexity. Position 249 is a phosphoserine (Ser-249). Over residues 284–295 (SLGGRVAGGLLG) the composition is skewed to gly residues. Ser-296 bears the Phosphoserine mark. The span at 296–310 (SGARASPGSSSGGDR) shows a compositional bias: low complexity. Pro residues predominate over residues 311 to 321 (SPPPPPPPPPS). A coiled-coil region spans residues 329–651 (VLEGKLRDRE…LELEARELAD (323 aa)). Residues 449–671 (SGEISLLKQQ…CLEEITATEI (223 aa)) are sufficient for interaction with CTNNB1. The interval 452–671 (ISLLKQQLKE…CLEEITATEI (220 aa)) is sufficient for interaction with KATNB1 and for inhibition of katanin-mediated microtubule severing. At Ser-572 the chain carries Phosphoserine. The short motif at 633 to 642 (LEQELQQLSL) is the Nuclear export signal element.

This sequence belongs to the LZTS2 family. In terms of assembly, interacts with KATNB1. Also interacts with CTNNB1, gamma-tubulin and KIF23.

It localises to the cytoplasm. It is found in the cytoskeleton. The protein localises to the microtubule organizing center. Its subcellular location is the centrosome. Its function is as follows. Negative regulator of katanin-mediated microtubule severing and release from the centrosome. Required for central spindle formation and the completion of cytokinesis. May negatively regulate axonal outgrowth by preventing the formation of microtubule bundles that are necessary for transport within the elongating axon. Negative regulator of the Wnt signaling pathway. Represses beta-catenin-mediated transcriptional activation by promoting the nuclear exclusion of beta-catenin. This chain is Leucine zipper putative tumor suppressor 2 (Lzts2), found in Mus musculus (Mouse).